We begin with the raw amino-acid sequence, 481 residues long: Probable zeta-carotene desaturase (481 aa).

It belongs to the zeta carotene desaturase family. It depends on decylplastoquinone as a cofactor. 6-decylubiquinone serves as cofactor.

It catalyses the reaction 9,9'-di-cis-zeta-carotene + 2 a quinone = 7,7',9,9'-tetra-cis-lycopene + 2 a quinol. The protein operates within carotenoid biosynthesis; lycopene biosynthesis. Functionally, catalyzes the conversion of zeta-carotene to lycopene via the intermediary of neurosporene. It carries out two consecutive desaturations (introduction of double bonds) at positions C-7 and C-7'. This is Probable zeta-carotene desaturase (zds) from Synechococcus elongatus (strain ATCC 33912 / PCC 7942 / FACHB-805) (Anacystis nidulans R2).